The sequence spans 229 residues: Aldehyde oxidoreductase iron-sulfur-binding subunit PaoA (229 aa).

A disordered region spans residues 1–21; sequence MSNQGEYPEDNRVGKHEPHDL. The tat-type signal signal peptide spans 1 to 53; that stretch reads MSNQGEYPEDNRVGKHEPHDLSLTRRDLIKVSAATAAAAVVYPHSTLAASVPA. A compositionally biased stretch (basic and acidic residues) spans 9–21; sequence EDNRVGKHEPHDL. One can recognise a 2Fe-2S ferredoxin-type domain in the interval 61–137; that stretch reads MPLTLKVNGK…GAEITTIEGL (77 aa). C99, C104, G105, C107, C119, C158, C161, C208, and C210 together coordinate [2Fe-2S] cluster.

Heterotrimer composed of PaoA, PaoB and PaoC. The cofactor is [2Fe-2S] cluster. Post-translationally, exported by the Tat system. The position of the signal peptide cleavage has not been experimentally proven.

It is found in the periplasm. It carries out the reaction an aldehyde + A + H2O = a carboxylate + AH2 + H(+). Its function is as follows. Oxidizes aldehydes to the corresponding carboxylic acids with a preference for aromatic aldehydes. It might play a role in the detoxification of aldehydes to avoid cell damage. The protein is Aldehyde oxidoreductase iron-sulfur-binding subunit PaoA of Escherichia coli O157:H7.